The following is a 509-amino-acid chain: Aspartic proteinase oryzasin-1 (509 aa).

Residues 1-24 (MGTRSVALVLLAAVLLQALLPASA) form the signal peptide. Positions 25 to 67 (AEGLVRIALKKRPIDENSRVAARLSGEEGARRLGLRGANSLGG) are cleaved as a propeptide — activation peptide. Residues 85–506 (YFGEIGVGTP…DYGKMRVGFA (422 aa)) form the Peptidase A1 domain. The active site involves Asp103. Residues Cys116 and Cys122 are joined by a disulfide bond. The N-linked (GlcNAc...) asparagine glycan is linked to Asn252. Cys281 and Cys285 are oxidised to a cystine. The active site involves Asp290. Residues 315–420 (VVSQECKTVV…NQLCDKLPSP (106 aa)) enclose the Saposin B-type domain. 4 disulfide bridges follow: Cys320-Cys414, Cys345-Cys386, Cys351-Cys383, and Cys428-Cys465. Asn400 carries an N-linked (GlcNAc...) asparagine glycan.

This sequence belongs to the peptidase A1 family.

It localises to the vacuole. Functionally, involved in the breakdown of propeptides of storage proteins in protein-storage vacuoles. The polypeptide is Aspartic proteinase oryzasin-1 (Oryza sativa subsp. japonica (Rice)).